We begin with the raw amino-acid sequence, 66 residues long: Large ribosomal subunit protein uL29 (66 aa).

The protein belongs to the universal ribosomal protein uL29 family.

This is Large ribosomal subunit protein uL29 from Chelativorans sp. (strain BNC1).